A 412-amino-acid chain; its full sequence is Peptidase T (412 aa).

Residue His78 coordinates Zn(2+). Asp80 is a catalytic residue. Residue Asp140 participates in Zn(2+) binding. Glu173 (proton acceptor) is an active-site residue. Positions 174, 196, and 379 each coordinate Zn(2+).

Belongs to the peptidase M20B family. The cofactor is Zn(2+).

The protein resides in the cytoplasm. The enzyme catalyses Release of the N-terminal residue from a tripeptide.. Cleaves the N-terminal amino acid of tripeptides. The chain is Peptidase T from Edwardsiella ictaluri (strain 93-146).